Here is a 326-residue protein sequence, read N- to C-terminus: Metal-binding protein YtgA (326 aa).

The N-terminal stretch at 1 to 21 (MSFFHTRKYKLILRGLLCLAG) is a signal peptide. The Fe(2+) site is built by H75, H141, H207, and D299.

It belongs to the bacterial solute-binding protein 9 family. In terms of assembly, monomer.

It is found in the periplasm. Functionally, part of the ATP-binding cassette (ABC) transport system YtgABCD involved in metal import. Binds Fe(2+), Mn(2+) and Ni(2+), with a preference for Fe(2+) and delivers them to the membrane permease for translocation into the cytoplasm. This is Metal-binding protein YtgA from Chlamydia trachomatis serovar D (strain ATCC VR-885 / DSM 19411 / UW-3/Cx).